A 71-amino-acid chain; its full sequence is Large ribosomal subunit protein bL31 (71 aa).

Zn(2+) is bound by residues cysteine 16, cysteine 18, cysteine 37, and cysteine 40.

The protein belongs to the bacterial ribosomal protein bL31 family. Type A subfamily. As to quaternary structure, part of the 50S ribosomal subunit. It depends on Zn(2+) as a cofactor.

Functionally, binds the 23S rRNA. This Chromohalobacter salexigens (strain ATCC BAA-138 / DSM 3043 / CIP 106854 / NCIMB 13768 / 1H11) protein is Large ribosomal subunit protein bL31.